We begin with the raw amino-acid sequence, 416 residues long: MTNYAIILAAGKGTRMTSDLPKVLHKVSGLTMLEHVFRSVKAISPEKAVTVIGHKSEKVRAVLADQSAFVHQTEQLGTGHAVMMAETQLEGLEGHTLVIAGDTPLITGESLKSLIDFHVNHKNVATILTATAQDPFGYGRIVRNKDGEVIKIVEQKDANEYEQQLKEINTGTYVFDNKRLFEALKCITTNNAQGEYYLTDVVAIFRANKEKVGAYILRDFNESLGVNDRVALATAETVMRQRITQKHMVNGVTFQNPETVYIESDVEIAPDVLIEGNVTLKGRTHIGSGTVLTNGTYIVDSEIGQGSIITNSMIESSVLAAGVTVGPYAHLRPGTTLGREVHIGNFVEVKGSHIGEKTKAGHLTYIGNAQVGSSVNVGAGTITVNYDGQNKYETVIGDHAFIWEQLDSHCTFGSWR.

Residues 1–229 (MTNYAIILAA…FNESLGVNDR (229 aa)) are pyrophosphorylase. UDP-N-acetyl-alpha-D-glucosamine-binding positions include 8-11 (LAAG), K22, Q72, and 77-78 (GT). D102 lines the Mg(2+) pocket. Residues G139, E154, N169, and N227 each coordinate UDP-N-acetyl-alpha-D-glucosamine. N227 contacts Mg(2+). Residues 230-250 (VALATAETVMRQRITQKHMVN) form a linker region. An N-acetyltransferase region spans residues 251–416 (GVTFQNPETV…DSHCTFGSWR (166 aa)). Residues R332 and K350 each coordinate UDP-N-acetyl-alpha-D-glucosamine. H362 functions as the Proton acceptor in the catalytic mechanism. UDP-N-acetyl-alpha-D-glucosamine contacts are provided by Y365 and N376. Acetyl-CoA contacts are provided by residues A379 and 385–386 (NY).

It in the N-terminal section; belongs to the N-acetylglucosamine-1-phosphate uridyltransferase family. The protein in the C-terminal section; belongs to the transferase hexapeptide repeat family. Homotrimer. The cofactor is Mg(2+).

The protein localises to the cytoplasm. The enzyme catalyses alpha-D-glucosamine 1-phosphate + acetyl-CoA = N-acetyl-alpha-D-glucosamine 1-phosphate + CoA + H(+). The catalysed reaction is N-acetyl-alpha-D-glucosamine 1-phosphate + UTP + H(+) = UDP-N-acetyl-alpha-D-glucosamine + diphosphate. It functions in the pathway nucleotide-sugar biosynthesis; UDP-N-acetyl-alpha-D-glucosamine biosynthesis; N-acetyl-alpha-D-glucosamine 1-phosphate from alpha-D-glucosamine 6-phosphate (route II): step 2/2. The protein operates within nucleotide-sugar biosynthesis; UDP-N-acetyl-alpha-D-glucosamine biosynthesis; UDP-N-acetyl-alpha-D-glucosamine from N-acetyl-alpha-D-glucosamine 1-phosphate: step 1/1. Its pathway is bacterial outer membrane biogenesis; LPS lipid A biosynthesis. Its function is as follows. Catalyzes the last two sequential reactions in the de novo biosynthetic pathway for UDP-N-acetylglucosamine (UDP-GlcNAc). The C-terminal domain catalyzes the transfer of acetyl group from acetyl coenzyme A to glucosamine-1-phosphate (GlcN-1-P) to produce N-acetylglucosamine-1-phosphate (GlcNAc-1-P), which is converted into UDP-GlcNAc by the transfer of uridine 5-monophosphate (from uridine 5-triphosphate), a reaction catalyzed by the N-terminal domain. The chain is Bifunctional protein GlmU from Streptococcus pyogenes serotype M12 (strain MGAS2096).